The sequence spans 477 residues: Glutamate--tRNA ligase 2 (477 aa).

The short motif at 12–22 is the 'HIGH' region element; the sequence is PSPTGRMHLGN. The Zn(2+) site is built by cysteine 109, cysteine 111, cysteine 136, and histidine 138. The 'KMSKS' region signature appears at 253–257; sequence PLSKR. Position 256 (lysine 256) interacts with ATP.

Belongs to the class-I aminoacyl-tRNA synthetase family. Glutamate--tRNA ligase type 1 subfamily. In terms of assembly, monomer. The cofactor is Zn(2+).

The protein localises to the cytoplasm. It carries out the reaction tRNA(Glu) + L-glutamate + ATP = L-glutamyl-tRNA(Glu) + AMP + diphosphate. Its function is as follows. Catalyzes the attachment of glutamate to tRNA(Glu) in a two-step reaction: glutamate is first activated by ATP to form Glu-AMP and then transferred to the acceptor end of tRNA(Glu). In Alkalilimnicola ehrlichii (strain ATCC BAA-1101 / DSM 17681 / MLHE-1), this protein is Glutamate--tRNA ligase 2.